A 293-amino-acid chain; its full sequence is Phosphoribosylaminoimidazole-succinocarboxamide synthase (293 aa).

This sequence belongs to the SAICAR synthetase family.

The enzyme catalyses 5-amino-1-(5-phospho-D-ribosyl)imidazole-4-carboxylate + L-aspartate + ATP = (2S)-2-[5-amino-1-(5-phospho-beta-D-ribosyl)imidazole-4-carboxamido]succinate + ADP + phosphate + 2 H(+). It functions in the pathway purine metabolism; IMP biosynthesis via de novo pathway; 5-amino-1-(5-phospho-D-ribosyl)imidazole-4-carboxamide from 5-amino-1-(5-phospho-D-ribosyl)imidazole-4-carboxylate: step 1/2. The chain is Phosphoribosylaminoimidazole-succinocarboxamide synthase from Desulfosudis oleivorans (strain DSM 6200 / JCM 39069 / Hxd3) (Desulfococcus oleovorans).